The sequence spans 182 residues: NADH-quinone oxidoreductase subunit B (182 aa).

C47, C48, C113, and C142 together coordinate [4Fe-4S] cluster.

The protein belongs to the complex I 20 kDa subunit family. NDH-1 is composed of 14 different subunits. Subunits NuoB, C, D, E, F, and G constitute the peripheral sector of the complex. Requires [4Fe-4S] cluster as cofactor.

It is found in the cell inner membrane. It carries out the reaction a quinone + NADH + 5 H(+)(in) = a quinol + NAD(+) + 4 H(+)(out). In terms of biological role, NDH-1 shuttles electrons from NADH, via FMN and iron-sulfur (Fe-S) centers, to quinones in the respiratory chain. The immediate electron acceptor for the enzyme in this species is believed to be ubiquinone. Couples the redox reaction to proton translocation (for every two electrons transferred, four hydrogen ions are translocated across the cytoplasmic membrane), and thus conserves the redox energy in a proton gradient. The sequence is that of NADH-quinone oxidoreductase subunit B from Anaeromyxobacter dehalogenans (strain 2CP-1 / ATCC BAA-258).